The chain runs to 66 residues: MAKGGDVRVKITLECTSCTRDSVDKKYPGVSRYITQKNRRNTPIRSELKKFCPYCYKHTIHGEIKK.

The protein belongs to the bacterial ribosomal protein bL33 family.

The protein resides in the plastid. The protein localises to the chloroplast. The sequence is that of Large ribosomal subunit protein bL33c from Cycas taitungensis (Prince sago).